Consider the following 154-residue polypeptide: Histidine-containing phosphotransfer protein 1 (154 aa).

N-acetylmethionine is present on Met1. The 106-residue stretch at 38 to 143 folds into the HPt domain; the sequence is NPDFVSQVVT…FKLEQQIVAS (106 aa). His79 bears the Phosphohistidine mark.

As to quaternary structure, interacts with the B-type response regulators ARR1, ARR2, ARR4 and ARR9. Binds to ETR1, AHK2, AHK3, AHK4, AHK5 and FBR12. Post-translationally, two-component system major event consists of a His-to-Asp phosphorelay between a sensor histidine kinase (HK) and a response regulator (RR). In plants, the His-to-Asp phosphorelay involves an additional intermediate named Histidine-containing phosphotransfer protein (HPt). This multistep phosphorelay consists of a His-Asp-His-Asp sequential transfer of a phosphate group between first a His and an Asp of the HK protein, followed by the transfer to a conserved His of the HPt protein and finally the transfer to an Asp in the receiver domain of the RR protein. As to expression, strongly expressed in roots.

The protein resides in the cytoplasm. It localises to the cytosol. Its subcellular location is the nucleus. Functions as a two-component phosphorelay mediators between cytokinin sensor histidine kinases and response regulator (B-type ARRs). Plays an important role in propagating cytokinin signal transduction through the multistep His-to-Asp phosphorelay. This is Histidine-containing phosphotransfer protein 1 (AHP1) from Arabidopsis thaliana (Mouse-ear cress).